Reading from the N-terminus, the 515-residue chain is Maturase K (515 aa).

It belongs to the intron maturase 2 family. MatK subfamily.

The protein localises to the plastid. It is found in the chloroplast. Functionally, usually encoded in the trnK tRNA gene intron. Probably assists in splicing its own and other chloroplast group II introns. This chain is Maturase K, found in Sorghum bicolor (Sorghum).